The following is a 461-amino-acid chain: D-phenylhydantoinase (461 aa).

Positions 59, 61, and 151 each coordinate a divalent metal cation. Lys151 bears the N6-carboxylysine mark. Tyr156 is a substrate binding site. Residues His182 and His239 each contribute to the a divalent metal cation site. Ser286 is a binding site for substrate. Asp313 is a binding site for a divalent metal cation. A substrate-binding site is contributed by Asn335.

Belongs to the metallo-dependent hydrolases superfamily. Hydantoinase/dihydropyrimidinase family. Homotetramer. The cofactor is a divalent metal cation. Carboxylation allows a single lysine to coordinate two divalent metal cations.

The catalysed reaction is D-5-phenylhydantoin + H2O = N-carbamoyl-D-phenylglycine + H(+). Its function is as follows. Catalyzes the stereospecific hydrolysis of the cyclic amide bond of D-hydantoin derivatives with an aromatic side chains at the 5'-position. Has no activity on dihydropyrimidines. The physiological function is unknown. In Escherichia coli O127:H6 (strain E2348/69 / EPEC), this protein is D-phenylhydantoinase.